Consider the following 448-residue polypeptide: Bifunctional F420 biosynthesis protein FbiB (448 aa).

Residues 1–244 are coenzyme F420:L-glutamate ligase; the sequence is MTGPEHGSAS…PGANDLFWLG (244 aa). Residues 20 to 23, Ser-50, and Lys-55 each bind GTP; that span reads LPEF. Asp-109 lines the a divalent metal cation pocket. Asn-112 provides a ligand contact to GTP. A divalent metal cation is bound by residues Asp-150 and Thr-151. The tract at residues 245–448 is dehydro-coenzyme F420-0 reductase; that stretch reads TAEALELGRQ…VPAADLLILK (204 aa). FMN-binding positions include 260-264 and Ala-288; that span reads RRSVR. A coenzyme F420-(gamma-Glu)n-binding site is contributed by Asp-320. 2 residues coordinate FMN: Gly-399 and Arg-436.

In the N-terminal section; belongs to the CofE family. Requires Mg(2+) as cofactor. It depends on Mn(2+) as a cofactor. The cofactor is K(+).

It catalyses the reaction oxidized coenzyme F420-0 + GTP + L-glutamate = oxidized coenzyme F420-1 + GDP + phosphate + H(+). It carries out the reaction oxidized coenzyme F420-1 + GTP + L-glutamate = oxidized coenzyme F420-2 + GDP + phosphate + H(+). The enzyme catalyses oxidized coenzyme F420-(gamma-L-Glu)(n) + GTP + L-glutamate = oxidized coenzyme F420-(gamma-L-Glu)(n+1) + GDP + phosphate + H(+). The catalysed reaction is oxidized coenzyme F420-0 + FMN + H(+) = dehydro coenzyme F420-0 + FMNH2. The protein operates within cofactor biosynthesis; coenzyme F420 biosynthesis. In terms of biological role, bifunctional enzyme that catalyzes the GTP-dependent successive addition of multiple gamma-linked L-glutamates to the L-lactyl phosphodiester of 7,8-didemethyl-8-hydroxy-5-deazariboflavin (F420-0) to form polyglutamated F420 derivatives, and the FMNH2-dependent reduction of dehydro-F420-0 to form F420-0. The protein is Bifunctional F420 biosynthesis protein FbiB of Mycobacterium tuberculosis (strain ATCC 25177 / H37Ra).